The primary structure comprises 170 residues: ATP synthase subunit b (170 aa).

A helical membrane pass occupies residues 5 to 25 (YFIPCLLLPTMMLASGGGGET).

It belongs to the ATPase B chain family. In terms of assembly, F-type ATPases have 2 components, F(1) - the catalytic core - and F(0) - the membrane proton channel. F(1) has five subunits: alpha(3), beta(3), gamma(1), delta(1), epsilon(1). F(0) has three main subunits: a(1), b(2) and c(10-14). The alpha and beta chains form an alternating ring which encloses part of the gamma chain. F(1) is attached to F(0) by a central stalk formed by the gamma and epsilon chains, while a peripheral stalk is formed by the delta and b chains.

It is found in the cell inner membrane. Functionally, f(1)F(0) ATP synthase produces ATP from ADP in the presence of a proton or sodium gradient. F-type ATPases consist of two structural domains, F(1) containing the extramembraneous catalytic core and F(0) containing the membrane proton channel, linked together by a central stalk and a peripheral stalk. During catalysis, ATP synthesis in the catalytic domain of F(1) is coupled via a rotary mechanism of the central stalk subunits to proton translocation. Its function is as follows. Component of the F(0) channel, it forms part of the peripheral stalk, linking F(1) to F(0). The chain is ATP synthase subunit b from Wolinella succinogenes (strain ATCC 29543 / DSM 1740 / CCUG 13145 / JCM 31913 / LMG 7466 / NCTC 11488 / FDC 602W) (Vibrio succinogenes).